We begin with the raw amino-acid sequence, 460 residues long: UDP-N-acetylmuramate--L-alanine ligase (460 aa).

G119–T125 is a binding site for ATP.

The protein belongs to the MurCDEF family.

It localises to the cytoplasm. It carries out the reaction UDP-N-acetyl-alpha-D-muramate + L-alanine + ATP = UDP-N-acetyl-alpha-D-muramoyl-L-alanine + ADP + phosphate + H(+). The protein operates within cell wall biogenesis; peptidoglycan biosynthesis. Functionally, cell wall formation. The protein is UDP-N-acetylmuramate--L-alanine ligase of Alkaliphilus metalliredigens (strain QYMF).